The following is a 90-amino-acid chain: uncharacterized protein (90 aa).

The next 3 membrane-spanning stretches (helical) occupy residues 5–27 (FDILTLILTAIYLLIGGGFIIYI), 40–62 (IYLSIGFFLLIIGASLPVLTFVA), and 67–89 (MSVVVVAILMQIAGLSSIFYSIV).

The protein localises to the cell membrane. This is an uncharacterized protein from Archaeoglobus fulgidus (strain ATCC 49558 / DSM 4304 / JCM 9628 / NBRC 100126 / VC-16).